Consider the following 273-residue polypeptide: Diaminopimelate epimerase (273 aa).

Residues asparagine 11 and asparagine 60 each coordinate substrate. The active-site Proton donor is the cysteine 69. Residues 70–71 (GN), asparagine 181, and 199–200 (ER) each bind substrate. Cysteine 209 functions as the Proton acceptor in the catalytic mechanism. A substrate-binding site is contributed by 210–211 (GT).

It belongs to the diaminopimelate epimerase family. Homodimer.

The protein localises to the cytoplasm. It carries out the reaction (2S,6S)-2,6-diaminopimelate = meso-2,6-diaminopimelate. The protein operates within amino-acid biosynthesis; L-lysine biosynthesis via DAP pathway; DL-2,6-diaminopimelate from LL-2,6-diaminopimelate: step 1/1. Its function is as follows. Catalyzes the stereoinversion of LL-2,6-diaminopimelate (L,L-DAP) to meso-diaminopimelate (meso-DAP), a precursor of L-lysine and an essential component of the bacterial peptidoglycan. This is Diaminopimelate epimerase from Helicobacter pylori (strain Shi470).